The sequence spans 333 residues: Isoaspartyl peptidase/L-asparaginase (333 aa).

Threonine 191 (nucleophile) is an active-site residue. Substrate is bound by residues 219 to 222 (RVGD) and 242 to 245 (TGHG).

This sequence belongs to the Ntn-hydrolase family. Heterodimer of an alpha and beta chain produced by autocleavage. This heterodimer may then dimerize in turn, giving rise to a heterotetramer. Cleaved into an alpha and beta chain by autocatalysis; this activates the enzyme. The N-terminal residue of the beta subunit is responsible for the nucleophile hydrolase activity. Present in testis, brain, liver, kidney, heart and skeletal muscle. In brain, specifically present in the astrocytic lineage. Present in sperm (at protein level).

Its subcellular location is the cytoplasm. The enzyme catalyses L-asparagine + H2O = L-aspartate + NH4(+). It carries out the reaction Cleavage of a beta-linked Asp residue from the N-terminus of a polypeptide.. In terms of biological role, has both L-asparaginase and beta-aspartyl peptidase activity. Is highly active with L-Asp beta-methyl ester. Besides, has catalytic activity toward beta-aspartyl dipeptides and their methyl esters, including beta-L-Asp-L-Phe, beta-L-Asp-L-Phe methyl ester (aspartame), beta-L-Asp-L-Ala, beta-L-Asp-L-Leu and beta-L-Asp-L-Lys. Does not have aspartylglucosaminidase activity and is inactive toward GlcNAc-L-Asn. Likewise, has no activity toward glutamine. May be involved in the production of L-aspartate, which can act as an excitatory neurotransmitter in some brain regions. This Rattus norvegicus (Rat) protein is Isoaspartyl peptidase/L-asparaginase (Asrgl1).